The chain runs to 515 residues: GMP synthase [glutamine-hydrolyzing] (515 aa).

One can recognise a Glutamine amidotransferase type-1 domain in the interval 6–198; it reads KVIILDFGSQ…VFKVAGLKAD (193 aa). The active-site Nucleophile is the C83. Catalysis depends on residues H172 and E174. Residues 199-390 form the GMPS ATP-PPase domain; it reads WTMSSFVENC…LGLPEFIIWR (192 aa). An ATP-binding site is contributed by 226 to 232; it reads SGGIDST.

Homodimer.

It carries out the reaction XMP + L-glutamine + ATP + H2O = GMP + L-glutamate + AMP + diphosphate + 2 H(+). It participates in purine metabolism; GMP biosynthesis; GMP from XMP (L-Gln route): step 1/1. In terms of biological role, catalyzes the synthesis of GMP from XMP. In Maridesulfovibrio salexigens (strain ATCC 14822 / DSM 2638 / NCIMB 8403 / VKM B-1763) (Desulfovibrio salexigens), this protein is GMP synthase [glutamine-hydrolyzing].